The following is a 589-amino-acid chain: L-fucose isomerase (589 aa).

Catalysis depends on proton acceptor residues E340 and D364. Mn(2+)-binding residues include E340, D364, and H527.

This sequence belongs to the L-fucose isomerase family. It depends on Mn(2+) as a cofactor.

The protein localises to the cytoplasm. The enzyme catalyses L-fucose = L-fuculose. It participates in carbohydrate degradation; L-fucose degradation; L-lactaldehyde and glycerone phosphate from L-fucose: step 1/3. Converts the aldose L-fucose into the corresponding ketose L-fuculose. In Haemophilus influenzae (strain PittEE), this protein is L-fucose isomerase.